The sequence spans 205 residues: N-(5'-phosphoribosyl)anthranilate isomerase (205 aa).

Belongs to the TrpF family.

The catalysed reaction is N-(5-phospho-beta-D-ribosyl)anthranilate = 1-(2-carboxyphenylamino)-1-deoxy-D-ribulose 5-phosphate. It participates in amino-acid biosynthesis; L-tryptophan biosynthesis; L-tryptophan from chorismate: step 3/5. The sequence is that of N-(5'-phosphoribosyl)anthranilate isomerase from Thiobacillus denitrificans (strain ATCC 25259 / T1).